A 508-amino-acid polypeptide reads, in one-letter code: Photosystem II CP47 reaction center protein (508 aa).

A run of 6 helical transmembrane segments spans residues 21–36 (AVHI…WAGS), 101–115 (IILS…IWHW), 140–156 (GIHL…FGAF), 203–218 (IAAG…FHLS), 237–252 (VLSS…AFVV), and 457–472 (NFAL…HGGR).

It belongs to the PsbB/PsbC family. PsbB subfamily. PSII is composed of 1 copy each of membrane proteins PsbA, PsbB, PsbC, PsbD, PsbE, PsbF, PsbH, PsbI, PsbJ, PsbK, PsbL, PsbM, PsbT, PsbX, PsbY, PsbZ, Psb30/Ycf12, at least 3 peripheral proteins of the oxygen-evolving complex and a large number of cofactors. It forms dimeric complexes. The cofactor is Binds multiple chlorophylls. PSII binds additional chlorophylls, carotenoids and specific lipids..

The protein resides in the plastid. It is found in the chloroplast thylakoid membrane. In terms of biological role, one of the components of the core complex of photosystem II (PSII). It binds chlorophyll and helps catalyze the primary light-induced photochemical processes of PSII. PSII is a light-driven water:plastoquinone oxidoreductase, using light energy to abstract electrons from H(2)O, generating O(2) and a proton gradient subsequently used for ATP formation. The chain is Photosystem II CP47 reaction center protein from Chaetosphaeridium globosum (Charophycean green alga).